The primary structure comprises 906 residues: Inter-alpha-trypsin inhibitor heavy chain H1 (906 aa).

A signal peptide spans 1–22 (MGLRGLLCVCLVSLLALQAVAA). A propeptide spanning residues 23–29 (QGSPTRN) is cleaved from the precursor. The VIT domain maps to 32–161 (GGKKRMAVDA…KATFRLTYEE (130 aa)). A glycan (S-linked (Hex...) cysteine) is linked at C55. S124 carries the phosphoserine modification. One can recognise a VWFA domain in the interval 287–470 (NVVFVIDISS…QQLQGFYEQV (184 aa)). T397 and T402 each carry phosphothreonine. An N-linked (GlcNAc...) asparagine glycan is attached at N583. S643 is a glycosylation site (O-linked (GalNAc...) serine). T648 carries an O-linked (GalNAc...) threonine glycan. D667 is modified (aspartate 1-(chondroitin 4-sulfate)-ester). A propeptide spanning residues 668–906 (PHFLIHVPQK…HTDYIVPDIF (239 aa)) is cleaved from the precursor. A glycan (N-linked (GlcNAc...) asparagine) is linked at N745.

This sequence belongs to the ITIH family. As to quaternary structure, I-alpha-I plasma protease inhibitors are assembled from one or two heavy chains (HC) and one light chain, bikunin. Inter-alpha-inhibitor (I-alpha-I) is composed of ITIH1/HC1, ITIH2/HC2 and bikunin. Interacts with TNFAIP6 (via Link and CUB domains). In terms of processing, heavy chains are linked to bikunin via chondroitin 4-sulfate esterified to the alpha-carboxyl of the C-terminal aspartate after propeptide cleavage. The S-linked glycan is composed of two 6-carbon sugars, possibly Glc or Gal.

Its subcellular location is the secreted. Its function is as follows. May act as a carrier of hyaluronan in serum or as a binding protein between hyaluronan and other matrix protein, including those on cell surfaces in tissues to regulate the localization, synthesis and degradation of hyaluronan which are essential to cells undergoing biological processes. The protein is Inter-alpha-trypsin inhibitor heavy chain H1 (ITIH1) of Bos taurus (Bovine).